We begin with the raw amino-acid sequence, 500 residues long: Centrosomal protein of 57 kDa (500 aa).

The segment covering Met-1 to Ser-16 has biased composition (low complexity). Residues Met-1–Phe-59 are disordered. The span at Ser-22–Pro-35 shows a compositional bias: polar residues. Residue Ser-53 is modified to Phosphoserine. Residues Thr-58 to Glu-239 form a centrosome localization domain (CLD) region. Residues Glu-63 to Arg-242 adopt a coiled-coil conformation. Disordered stretches follow at residues Ser-256–Thr-275 and Gln-432–Leu-478. The mediates interaction with microtubules stretch occupies residues Gly-278–Leu-491. Residues Thr-389–Ser-449 adopt a coiled-coil conformation. Composition is skewed to basic and acidic residues over residues Gln-432 to Asp-444 and Ser-461 to Arg-475.

This sequence belongs to the translokin family. Interacts with FGF2 and RAP80. Does not interact with FGF1 or FGF2 isoform 24 kDa. Homodimer and homooligomer. Interacts with microtubules. As to expression, ubiquitous (at protein level). Expressed in testis, predominantly in round spermatids. Low expression is detected in other tissues.

The protein localises to the nucleus. It localises to the cytoplasm. It is found in the cytoskeleton. Its subcellular location is the microtubule organizing center. The protein resides in the centrosome. Centrosomal protein which may be required for microtubule attachment to centrosomes. May act by forming ring-like structures around microtubules. Mediates nuclear translocation and mitogenic activity of the internalized growth factor FGF2. The chain is Centrosomal protein of 57 kDa (Cep57) from Mus musculus (Mouse).